Reading from the N-terminus, the 54-residue chain is Lectin alpha-1 chain (54 aa).

The protein belongs to the leguminous lectin family. As to quaternary structure, tetramer of two alpha and two beta chains.

The sequence is that of Lectin alpha-1 chain from Lathyrus cicera (Flat-pod pea).